Here is a 1170-residue protein sequence, read N- to C-terminus: Glucose transport transcription regulator RGT1 (1170 aa).

Positions 1 to 22 (MNELNTVSTNSSDSTKDGGTSN) are enriched in polar residues. Disordered regions lie at residues 1-47 (MNEL…SRAC) and 77-149 (SFDR…SNSV). A DNA-binding region (zn(2)-C6 fungal-type) is located at residues 47-76 (CDQCRKKKIKCDYKDEKGVCSNCQRNGDRC). Over residues 99-108 (RTNEIQDHNN) the composition is skewed to basic and acidic residues. A compositionally biased stretch (low complexity) spans 113 to 138 (NTFDNSNNTLNNNTGNSGDNGINSNT). A compositionally biased stretch (polar residues) spans 139-149 (VPSTPSRSNSV). Phosphoserine is present on residues Ser202, Ser205, Ser208, and Ser229. Disordered stretches follow at residues 226–254 (VQQS…SASG), 269–288 (APTD…IPSL), 293–323 (SNSL…LQQG), 384–506 (AQQT…HPMT), and 944–977 (NYRP…SAAP). Over residues 239-250 (SGNANGSVTGSG) the composition is skewed to low complexity. The segment covering 271 to 280 (TDDHNGEQTR) has biased composition (basic and acidic residues). Residues Ser283 and Ser284 each carry the phosphoserine modification. Low complexity-rich tracts occupy residues 293 to 302 (SNSLLLGGQP), 309 to 323 (QQSQ…LQQG), and 385 to 397 (QQTQ…QVPQ). 2 positions are modified to phosphoserine: Ser410 and Ser414. Residues 411–422 (APVSVTLSTDRL) are compositionally biased toward polar residues. Low complexity predominate over residues 424–444 (GNENNNGEINNNNGSNNSGSS). Over residues 445 to 457 (KDTSQHSQESVTT) the composition is skewed to polar residues. A compositionally biased stretch (basic residues) spans 473–488 (STKKRRKSYVSKKTKP). Residues 493-506 (SISITSKDSAHPMT) show a composition bias toward polar residues. The residue at position 1130 (Ser1130) is a Phosphoserine.

The protein belongs to the EDS1/RGT1 family. Glucose-induced phosphorylation regulates the DNA-binding activity. Hyperphosphorylation in cells growing on high levels of glucose does prevents DNA-binding and dephosphorylation restores DNA-binding ability.

The protein localises to the nucleus. Its subcellular location is the cytoplasm. Its function is as follows. Glucose-responsive transcription factor that regulates expression of several glucose transporter (HXT) genes in response to glucose. In the absence of glucose, it functions as a transcriptional repressor, whereas high concentrations of glucose cause it to function as a transcriptional activator. In cells growing on low levels of glucose, has a neutral role, neither repressing nor activating transcription. Binds the consensus binding site sequence 5'-CGGANNA-3', of which multiple copies are present in all HXT promoters regulated by RGT1. The sequence is that of Glucose transport transcription regulator RGT1 (RGT1) from Saccharomyces cerevisiae (strain JAY291) (Baker's yeast).